Here is a 146-residue protein sequence, read N- to C-terminus: Putative trafficking protein particle complex subunit TRS31 (146 aa).

It belongs to the TRAPP small subunits family. BET3 subfamily. In terms of assembly, part of the multisubunit TRAPP (transport protein particle) complex.

The protein resides in the golgi apparatus. The protein localises to the cis-Golgi network. It is found in the endoplasmic reticulum. In terms of biological role, may play a role in vesicular transport from endoplasmic reticulum to Golgi. This is Putative trafficking protein particle complex subunit TRS31 (TRS31) from Encephalitozoon cuniculi (strain GB-M1) (Microsporidian parasite).